A 259-amino-acid polypeptide reads, in one-letter code: UPF0246 protein Rfer_2372 (259 aa).

The protein belongs to the UPF0246 family.

The polypeptide is UPF0246 protein Rfer_2372 (Albidiferax ferrireducens (strain ATCC BAA-621 / DSM 15236 / T118) (Rhodoferax ferrireducens)).